Reading from the N-terminus, the 278-residue chain is Large ribosomal subunit protein uL2 (278 aa).

The segment at 224–278 is disordered; the sequence is VAMNPVDHPHGGGEGRTSGGRNPVTPWGVPTKGKKTRSNKRTDTFILSSRHNRKK.

The protein belongs to the universal ribosomal protein uL2 family. As to quaternary structure, part of the 50S ribosomal subunit. Forms a bridge to the 30S subunit in the 70S ribosome.

Its function is as follows. One of the primary rRNA binding proteins. Required for association of the 30S and 50S subunits to form the 70S ribosome, for tRNA binding and peptide bond formation. It has been suggested to have peptidyltransferase activity; this is somewhat controversial. Makes several contacts with the 16S rRNA in the 70S ribosome. This chain is Large ribosomal subunit protein uL2, found in Methylorubrum extorquens (strain CM4 / NCIMB 13688) (Methylobacterium extorquens).